The following is a 418-amino-acid chain: FK506-binding protein 3 (418 aa).

3 disordered regions span residues 49–133 (PSTL…DDEF), 172–273 (SLTG…ETKK), and 289–309 (LEEGPTKKEEKKEEKKEKPKT). The segment covering 61–89 (YDDEDDAGGLLGDYDEDELDISEEEEEEE) has biased composition (acidic residues). The segment covering 93–103 (KSKKGKGKGKS) has biased composition (basic residues). 2 stretches are compositionally biased toward acidic residues: residues 108 to 133 (EEEEEEEEDEDEGDEELIEIDTDDEF) and 186 to 224 (GYDDEDDDEEDDESYDEDEDDYLTPDEEADLEELEDASD). Residues 225–239 (VEAKIQELVEKEQSK) are compositionally biased toward basic and acidic residues. Residues 251-264 (PEEEEEEEEEEEEE) show a composition bias toward acidic residues. One can recognise a PPIase FKBP-type domain in the interval 332 to 418 (GSKVGMRYIG…TFDVKLVSLK (87 aa)).

Belongs to the FKBP-type PPIase family. FKBP3/4 subfamily.

Its subcellular location is the nucleus. It localises to the nucleolus. The catalysed reaction is [protein]-peptidylproline (omega=180) = [protein]-peptidylproline (omega=0). Inhibited by both FK506 and rapamycin. Its function is as follows. PPIases accelerate the folding of proteins. It catalyzes the cis-trans isomerization of proline imidic peptide bonds in oligopeptides. This chain is FK506-binding protein 3 (FPR3), found in Kluyveromyces lactis (strain ATCC 8585 / CBS 2359 / DSM 70799 / NBRC 1267 / NRRL Y-1140 / WM37) (Yeast).